A 377-amino-acid polypeptide reads, in one-letter code: Pseudouridylate synthase RPUSD4, mitochondrial (377 aa).

The tract at residues 51–70 is disordered; sequence LRAQKQQQKTKEPAPTNPVQ. Asp-153 is an active-site residue.

This sequence belongs to the pseudouridine synthase RluA family. Interacts with 16S mt-rRNA, mt-tRNA(Phe) and mt-tRNA(Met). Forms a regulatory protein-RNA complex, consisting of RCC1L, NGRN, RPUSD3, RPUSD4, TRUB2, FASTKD2 and 16S mt-rRNA.

The protein resides in the mitochondrion matrix. The protein localises to the nucleus. It localises to the cytoplasm. It carries out the reaction uridine in 5S rRNA = pseudouridine in 5S rRNA. The catalysed reaction is a uridine in tRNA = a pseudouridine in tRNA. The enzyme catalyses a uridine in mRNA = a pseudouridine in mRNA. Functionally, catalyzes uridine to pseudouridine isomerization (pseudouridylation) of different mitochondrial RNA substrates. Acts on position 1397 in 16S mitochondrial ribosomal RNA (16S mt-rRNA). This modification is required for the assembly of 16S mt-rRNA into a functional mitochondrial ribosome. As a component of a functional protein-RNA module, consisting of RCC1L, NGRN, RPUSD3, RPUSD4, TRUB2, FASTKD2 and 16S mt-rRNA, controls 16S mt-rRNA abundance and is required for intra-mitochondrial translation. Acts on position 39 in mitochondrial tRNA(Phe). Also catalyzes pseudouridylation of mRNAs in nucleus: acts as a regulator of pre-mRNA splicing by mediating pseudouridylation of pre-mRNAs at locations associated with alternatively spliced regions. Pseudouridylation of pre-mRNAs near splice sites directly regulates mRNA splicing and mRNA 3'-end processing. This chain is Pseudouridylate synthase RPUSD4, mitochondrial, found in Bos taurus (Bovine).